We begin with the raw amino-acid sequence, 165 residues long: Putative tyrosine-protein phosphatase AMV078 (165 aa).

The region spanning 2-149 (NISNINNDIY…LKFYNSYKNI (148 aa)) is the Tyrosine-protein phosphatase domain. The Phosphocysteine intermediate role is filled by Cys-94.

It belongs to the protein-tyrosine phosphatase family. Non-receptor class dual specificity subfamily.

It catalyses the reaction O-phospho-L-tyrosyl-[protein] + H2O = L-tyrosyl-[protein] + phosphate. The protein is Putative tyrosine-protein phosphatase AMV078 of Amsacta moorei entomopoxvirus (AmEPV).